Here is a 111-residue protein sequence, read N- to C-terminus: Dynein light chain Tctex-type (111 aa).

The protein belongs to the dynein light chain Tctex-type family.

It localises to the cytoplasm. The protein resides in the cytoskeleton. Acts as a non-catalytic accessory component of a dynein complex. In Dictyostelium discoideum (Social amoeba), this protein is Dynein light chain Tctex-type (dlcA).